A 618-amino-acid polypeptide reads, in one-letter code: UvrABC system protein C (618 aa).

Residues 19–97 (SEPGIYRMLD…IKALRPKYNV (79 aa)) form the GIY-YIG domain. A UVR domain is found at 208-243 (QIILDALAERMKQAVNQLNFEEAAVLRDQIKNLRLI).

Belongs to the UvrC family. As to quaternary structure, interacts with UvrB in an incision complex.

It is found in the cytoplasm. In terms of biological role, the UvrABC repair system catalyzes the recognition and processing of DNA lesions. UvrC both incises the 5' and 3' sides of the lesion. The N-terminal half is responsible for the 3' incision and the C-terminal half is responsible for the 5' incision. In Legionella pneumophila (strain Paris), this protein is UvrABC system protein C.